The sequence spans 363 residues: MTDSPRRRFLMMAGGTGGHVFPALATARALQQRGHEVHWLGASGGMEERLIGDTDIPLSLIHISGLRGKGKLALLLAPFRLMRALGEAYTHLRRIRPDCVVGMGGFVTGPGGIAAWLMRKPLVIHEQNAIAGMTNRWLTRFSETVLEAFPGSFGDQTVTRCTGNPVRGEVASMDEPEQRLAGRSGKLRVLVVGGSLGAQVFNQQLPQALALMPEADRPDVRHQCGEKNLEAAQAAYEEAGVNASVEPFIRDMAEAYGWADLVICRAGALTVSELCAAGIGAILVPFPHAVDDHQTRNGQHMVKAGAAILVPQPRLTPEVLAETLKDLATDRKRILTMAKAARSLARPDATERVVNYCLEAANG.

UDP-N-acetyl-alpha-D-glucosamine is bound by residues 16–18, asparagine 128, arginine 167, serine 195, isoleucine 249, 268–273, and glutamine 294; these read TGG and ALTVSE.

This sequence belongs to the glycosyltransferase 28 family. MurG subfamily.

It localises to the cell inner membrane. It catalyses the reaction di-trans,octa-cis-undecaprenyl diphospho-N-acetyl-alpha-D-muramoyl-L-alanyl-D-glutamyl-meso-2,6-diaminopimeloyl-D-alanyl-D-alanine + UDP-N-acetyl-alpha-D-glucosamine = di-trans,octa-cis-undecaprenyl diphospho-[N-acetyl-alpha-D-glucosaminyl-(1-&gt;4)]-N-acetyl-alpha-D-muramoyl-L-alanyl-D-glutamyl-meso-2,6-diaminopimeloyl-D-alanyl-D-alanine + UDP + H(+). The protein operates within cell wall biogenesis; peptidoglycan biosynthesis. Functionally, cell wall formation. Catalyzes the transfer of a GlcNAc subunit on undecaprenyl-pyrophosphoryl-MurNAc-pentapeptide (lipid intermediate I) to form undecaprenyl-pyrophosphoryl-MurNAc-(pentapeptide)GlcNAc (lipid intermediate II). This Marinobacter nauticus (strain ATCC 700491 / DSM 11845 / VT8) (Marinobacter aquaeolei) protein is UDP-N-acetylglucosamine--N-acetylmuramyl-(pentapeptide) pyrophosphoryl-undecaprenol N-acetylglucosamine transferase.